The sequence spans 456 residues: uncharacterized protein (456 aa).

The 164-residue stretch at 277-440 (IKNTKTIKQL…TKQLVRTTAK (164 aa)) folds into the YrdC-like domain.

This is an uncharacterized protein from Mycoplasma genitalium (strain ATCC 33530 / DSM 19775 / NCTC 10195 / G37) (Mycoplasmoides genitalium).